The following is a 195-amino-acid chain: MSRTKKTRRITDIMPARKTDKPKQPMPKLGGGKNRKLTRYELDAQAREEKRKRKHKGLPTGSRNADPAEQKKAVVKEVKDPRIGSRKKVPLMVEFVNQPEKGRTIKAVPVEPIKPTLSPEQELEQLENNECLNQLLDDLEAGKTLSAEDQKFMNECLDRIDELMTELGIEYEDEEGDNGDALLRQFETMDINKFR.

The segment at 1–81 (MSRTKKTRRI…KAVVKEVKDP (81 aa)) is disordered. Basic and acidic residues-rich tracts occupy residues 9-23 (RITD…DKPK), 38-49 (TRYELDAQAREE), and 66-81 (DPAE…VKDP).

It belongs to the YihI family. As to quaternary structure, interacts with Der.

Functionally, a GTPase-activating protein (GAP) that modifies Der/EngA GTPase function. May play a role in ribosome biogenesis. The sequence is that of Der GTPase-activating protein YihI from Mannheimia haemolytica (Pasteurella haemolytica).